A 218-amino-acid chain; its full sequence is Small ribosomal subunit protein uS3c (218 aa).

A KH type-2 domain is found at 47–120 (VRTHIKSSSN…KLHIAIEKVA (74 aa)).

Belongs to the universal ribosomal protein uS3 family. In terms of assembly, part of the 30S ribosomal subunit.

The protein localises to the plastid. It localises to the chloroplast. The chain is Small ribosomal subunit protein uS3c (rps3) from Picea abies (Norway spruce).